The primary structure comprises 372 residues: 4-hydroxy-3-methylbut-2-en-1-yl diphosphate synthase (flavodoxin) (372 aa).

Residues cysteine 270, cysteine 273, cysteine 305, and glutamate 312 each coordinate [4Fe-4S] cluster.

It belongs to the IspG family. [4Fe-4S] cluster serves as cofactor.

It catalyses the reaction (2E)-4-hydroxy-3-methylbut-2-enyl diphosphate + oxidized [flavodoxin] + H2O + 2 H(+) = 2-C-methyl-D-erythritol 2,4-cyclic diphosphate + reduced [flavodoxin]. Its pathway is isoprenoid biosynthesis; isopentenyl diphosphate biosynthesis via DXP pathway; isopentenyl diphosphate from 1-deoxy-D-xylulose 5-phosphate: step 5/6. Converts 2C-methyl-D-erythritol 2,4-cyclodiphosphate (ME-2,4cPP) into 1-hydroxy-2-methyl-2-(E)-butenyl 4-diphosphate. This is 4-hydroxy-3-methylbut-2-en-1-yl diphosphate synthase (flavodoxin) from Salmonella typhi.